The chain runs to 277 residues: Diaminopimelate epimerase (277 aa).

Substrate is bound by residues N13, Q46, and N66. C75 serves as the catalytic Proton donor. Substrate is bound by residues G76–N77, N160, N193, and E211–R212. The Proton acceptor role is filled by C220. Residue G221–S222 participates in substrate binding.

Belongs to the diaminopimelate epimerase family. In terms of assembly, homodimer.

Its subcellular location is the cytoplasm. It catalyses the reaction (2S,6S)-2,6-diaminopimelate = meso-2,6-diaminopimelate. Its pathway is amino-acid biosynthesis; L-lysine biosynthesis via DAP pathway; DL-2,6-diaminopimelate from LL-2,6-diaminopimelate: step 1/1. Functionally, catalyzes the stereoinversion of LL-2,6-diaminopimelate (L,L-DAP) to meso-diaminopimelate (meso-DAP), a precursor of L-lysine and an essential component of the bacterial peptidoglycan. In Legionella pneumophila (strain Paris), this protein is Diaminopimelate epimerase.